Consider the following 397-residue polypeptide: uncharacterized protein (397 aa).

9 helical membrane passes run 1–21 (MGAS…LMLV), 39–59 (VIQS…VVVF), 76–96 (EALS…FGVP), 103–123 (VLLF…FVGA), 124–144 (ALIE…LVMA), 194–214 (MMTP…LFAF), 219–239 (ALFG…FSLL), 255–275 (LVYL…KLML), and 301–321 (QSLT…FWSA).

Belongs to the TerC family.

The protein resides in the cell membrane. This is an uncharacterized protein from Mycobacterium tuberculosis (strain CDC 1551 / Oshkosh).